The following is a 337-amino-acid chain: Arylacetonitrilase (337 aa).

The CN hydrolase domain maps to 7-278 (VRVAVTQHEP…EGFVYADLDL (272 aa)). Glu47 serves as the catalytic Proton acceptor. Lys127 is an active-site residue. The Nucleophile role is filled by Cys162. The tract at residues 311-337 (QHRPEGQADNAAYGLDVPSGLVEEEGA) is disordered.

This sequence belongs to the carbon-nitrogen hydrolase superfamily. Nitrilase family.

It catalyses the reaction a nitrile + 2 H2O = a carboxylate + NH4(+). It carries out the reaction 4-chlorophenylacetonitrile + 2 H2O = 4-chlorophenylacetate + NH4(+). Nitrilase that hydrolyzes preferentially phenylacetonitrile, but also (R,S)-mandelonitrile, and 2-phenylpropionitrile. The protein is Arylacetonitrilase of Aspergillus niger (strain ATCC MYA-4892 / CBS 513.88 / FGSC A1513).